Reading from the N-terminus, the 839-residue chain is Autophagy-related protein 9A (839 aa).

Position 2 is an N-acetylalanine (alanine 2). Topologically, residues 2-61 (AQFDTEYQRLEASYSDSPPGEEDLLVHVAEGSKSPWHHIENLDLFFSRVYNLHQKNGFTC) are cytoplasmic. The Tyrosine-based sorting signal motif lies at 8 to 11 (YQRL). Phosphoserine is present on residues serine 14, serine 16, and serine 18. A helical membrane pass occupies residues 62–84 (MLIGEIFELMQFLFVVAFTTFLV). Residues 85-128 (SCVDYDILFANKMVNHSLHPTEPVKVTLPDAFLPAQVCSARIQE) lie on the Lumenal side of the membrane. Asparagine 99 is a glycosylation site (N-linked (GlcNAc...) asparagine). A helical transmembrane segment spans residues 129–154 (NGSLITILVIAGVFWIHRLIKFIYNI). Residues 155–290 (CCYWEIHSFY…ELAQRLSNRI (136 aa)) lie on the Cytoplasmic side of the membrane. An intramembrane segment occupies 291-301 (LWIGIANFLLC). Residues 302–319 (PLILIWQILYAFFSYAEV) lie on the Cytoplasmic side of the membrane. Residues 320–328 (LKREPGALG) lie within the membrane without spanning it. Topologically, residues 329–371 (ARCWSLYGRCYLRHFNELEHELQSRLNRGYKPASKYMNCFLSP) are cytoplasmic. A helical transmembrane segment spans residues 372–397 (LLTLLAKNGAFFAGSILAVLIALTIY). Residues 398 to 406 (DEDVLAVEH) are Lumenal-facing. Residues 407 to 424 (VLTTVTLLGVTVTVCRSF) traverse the membrane as a helical segment. The Cytoplasmic portion of the chain corresponds to 425 to 470 (IPDQHMVFCPEQLLRVILAHIHYMPDHWQGNAHRSQTRDEFAQLFQ). The stretch at 471–480 (YKAVFILEEL) is an intramembrane region. At 481-483 (LSP) the chain is on the cytoplasmic side. Residues 484–492 (IVTPLILIF) lie within the membrane without spanning it. Residues 493–839 (CLRPRALEII…DELPPQVHKV (347 aa)) lie on the Cytoplasmic side of the membrane. Phosphoserine is present on residues serine 656, serine 735, serine 738, serine 741, and serine 828. Disordered stretches follow at residues 656-689 (SPLQ…SSVW) and 717-839 (HKQQ…VHKV). A compositionally biased stretch (basic and acidic residues) spans 724-736 (EPERHVWHRRESD). Composition is skewed to acidic residues over residues 737 to 747 (ESGESAPEEGG) and 823 to 832 (VPEEGSEDEL).

Belongs to the ATG9 family. In terms of assembly, homotrimer; forms a homotrimer with a central pore that forms a path between the two membrane leaflets. Interacts (via cytoplasmic its C-terminus) with ATG2A. Interacts with SUPT20H. Interacts (via the tyrosine-based sorting signal motif) with AP4M1; promoting association with the AP-4 complex. Interacts with ARFIP1 and ARFIP2. Interacts with PI4K2A and PI4KB. Interacts with ATG4A; the interaction is direct and promotes ATG9A trafficking. In terms of processing, ufmylated in a DDRGK1 dependent manner.

Its subcellular location is the preautophagosomal structure membrane. It localises to the cytoplasmic vesicle. It is found in the autophagosome membrane. The protein resides in the golgi apparatus. The protein localises to the trans-Golgi network membrane. Its subcellular location is the late endosome membrane. It localises to the recycling endosome membrane. It is found in the endoplasmic reticulum membrane. The protein resides in the mitochondrion membrane. It carries out the reaction a 1,2-diacyl-sn-glycero-3-phosphocholine(in) = a 1,2-diacyl-sn-glycero-3-phosphocholine(out). The catalysed reaction is a 1,2-diacyl-sn-glycero-3-phospho-L-serine(in) = a 1,2-diacyl-sn-glycero-3-phospho-L-serine(out). The enzyme catalyses a 1,2-diacyl-sn-glycero-3-phosphoethanolamine(in) = a 1,2-diacyl-sn-glycero-3-phosphoethanolamine(out). Functionally, phospholipid scramblase involved in autophagy by mediating autophagosomal membrane expansion. Cycles between the preautophagosomal structure/phagophore assembly site (PAS) and the cytoplasmic vesicle pool and supplies membrane for the growing autophagosome. Lipid scramblase activity plays a key role in preautophagosomal structure/phagophore assembly by distributing the phospholipids that arrive through ATG2 (ATG2A or ATG2B) from the cytoplasmic to the luminal leaflet of the bilayer, thereby driving autophagosomal membrane expansion. Also required to supply phosphatidylinositol 4-phosphate to the autophagosome initiation site by recruiting the phosphatidylinositol 4-kinase beta (PI4KB) in a process dependent on ARFIP2, but not ARFIP1. In addition to autophagy, also plays a role in necrotic cell death. The sequence is that of Autophagy-related protein 9A from Rattus norvegicus (Rat).